A 190-amino-acid chain; its full sequence is B3 domain-containing protein At1g49475 (190 aa).

Positions 1-27 (MRNMHTNRRSPGPITSAATQRRLKPEP) are disordered. The segment at residues 33 to 125 (KFIKIILLSR…CFRVVIFDVS (93 aa)) is a DNA-binding region (TF-B3).

It is found in the nucleus. This Arabidopsis thaliana (Mouse-ear cress) protein is B3 domain-containing protein At1g49475.